Reading from the N-terminus, the 319-residue chain is uncharacterized protein (319 aa).

Positions 281 to 319 (KVERKQRRRDDQNIMRSKLPQQRQNPFCSTERPKRARCD) are disordered. Residues 299 to 308 (LPQQRQNPFC) show a composition bias toward polar residues.

The protein localises to the cytoplasm. Its subcellular location is the nucleus. This is an uncharacterized protein from Saccharomyces cerevisiae (strain ATCC 204508 / S288c) (Baker's yeast).